A 406-amino-acid chain; its full sequence is Serine/threonine transporter SstT (406 aa).

9 consecutive transmembrane segments (helical) span residues 21–41, 45–65, 79–99, 138–158, 179–199, 213–233, 285–305, 313–333, and 360–380; these read LIIG…VAIL, FVGA…MGAI, ILIL…IASF, ALMN…GLAL, VVKW…FDSI, LLLL…PLIV, ISIP…IAVL, LGIT…AIAA, and IAMQ…SCET.

Belongs to the dicarboxylate/amino acid:cation symporter (DAACS) (TC 2.A.23) family.

It is found in the cell membrane. It carries out the reaction L-serine(in) + Na(+)(in) = L-serine(out) + Na(+)(out). It catalyses the reaction L-threonine(in) + Na(+)(in) = L-threonine(out) + Na(+)(out). Involved in the import of serine and threonine into the cell, with the concomitant import of sodium (symport system). This Desulfitobacterium hafniense (strain Y51) protein is Serine/threonine transporter SstT.